The sequence spans 353 residues: MTIVLGRVPKEENDLFDTMDDWLRRDRFVFVGWSGLLLFPCAYFALGGWFTGTTFVTSWYTHGLASSYLEGCNFLTAAVSTPANSLAHSLLLLWGPEAQGDFTRWCQLGGLWTFVALHGAFALIGFMLRQFELARSVQLRPYNAISFSGPIAVFVSVFLIYPLGQSGWFFAPSFGVAAIFRFILFFQGFHNWTLNPFHMMGVAGVLGAALLCAIHGATVENTLFEDGDGANTFRAFNPTQAEETYSMVTANRFWSQIFGVAFSNKRWLHFFMLFVPVTGLWMSAIGVVGLALNLRAYDFVSQEIRAAEDPEFETFYTKNILLNEGIRAWMAAQDQPHENLIFPEEVLPRGNAL.

Threonine 2 carries the post-translational modification N-acetylthreonine. Threonine 2 bears the Phosphothreonine mark. Residues 41–61 traverse the membrane as a helical segment; it reads CAYFALGGWFTGTTFVTSWYT. Histidine 118 lines the chlorophyll a pocket. A helical membrane pass occupies residues 125–141; sequence GFMLRQFELARSVQLRP. Glutamine 130 and asparagine 143 together coordinate pheophytin a. The chain crosses the membrane as a helical span at residues 153-166; it reads VFVSVFLIYPLGQS. Histidine 198 contributes to the chlorophyll a binding site. Residues 208 to 228 form a helical membrane-spanning segment; it reads AALLCAIHGATVENTLFEDGD. A plastoquinone-binding residues include histidine 215 and phenylalanine 262. Histidine 215 is a binding site for Fe cation. Histidine 269 serves as a coordination point for Fe cation. The helical transmembrane segment at 279-295 threads the bilayer; it reads GLWMSAIGVVGLALNLR.

The protein belongs to the reaction center PufL/M/PsbA/D family. In terms of assembly, PSII is composed of 1 copy each of membrane proteins PsbA, PsbB, PsbC, PsbD, PsbE, PsbF, PsbH, PsbI, PsbJ, PsbK, PsbL, PsbM, PsbT, PsbX, PsbY, PsbZ, Psb30/Ycf12, at least 3 peripheral proteins of the oxygen-evolving complex and a large number of cofactors. It forms dimeric complexes. It depends on The D1/D2 heterodimer binds P680, chlorophylls that are the primary electron donor of PSII, and subsequent electron acceptors. It shares a non-heme iron and each subunit binds pheophytin, quinone, additional chlorophylls, carotenoids and lipids. There is also a Cl(-1) ion associated with D1 and D2, which is required for oxygen evolution. The PSII complex binds additional chlorophylls, carotenoids and specific lipids. as a cofactor.

The protein localises to the plastid. The protein resides in the chloroplast thylakoid membrane. The catalysed reaction is 2 a plastoquinone + 4 hnu + 2 H2O = 2 a plastoquinol + O2. In terms of biological role, photosystem II (PSII) is a light-driven water:plastoquinone oxidoreductase that uses light energy to abstract electrons from H(2)O, generating O(2) and a proton gradient subsequently used for ATP formation. It consists of a core antenna complex that captures photons, and an electron transfer chain that converts photonic excitation into a charge separation. The D1/D2 (PsbA/PsbD) reaction center heterodimer binds P680, the primary electron donor of PSII as well as several subsequent electron acceptors. D2 is needed for assembly of a stable PSII complex. The chain is Photosystem II D2 protein from Lolium perenne (Perennial ryegrass).